The chain runs to 338 residues: Lipoate-protein ligase A (338 aa).

Residues 29 to 216 form the BPL/LPL catalytic domain; sequence PATQRVLFLW…AFFAHYGERV (188 aa). Residues Arg-71, 76 to 79, and Lys-134 each bind ATP; that span reads GAVF. Lys-134 is a binding site for (R)-lipoate.

This sequence belongs to the LplA family. In terms of assembly, monomer.

It localises to the cytoplasm. It carries out the reaction L-lysyl-[lipoyl-carrier protein] + (R)-lipoate + ATP = N(6)-[(R)-lipoyl]-L-lysyl-[lipoyl-carrier protein] + AMP + diphosphate + H(+). It participates in protein modification; protein lipoylation via exogenous pathway; protein N(6)-(lipoyl)lysine from lipoate: step 1/2. The protein operates within protein modification; protein lipoylation via exogenous pathway; protein N(6)-(lipoyl)lysine from lipoate: step 2/2. Catalyzes both the ATP-dependent activation of exogenously supplied lipoate to lipoyl-AMP and the transfer of the activated lipoyl onto the lipoyl domains of lipoate-dependent enzymes. The polypeptide is Lipoate-protein ligase A (Escherichia coli O8 (strain IAI1)).